We begin with the raw amino-acid sequence, 1116 residues long: Protein translocase subunit SecA (1116 aa).

ATP-binding positions include Gln-176, Gly-194–Thr-198, and Asp-693.

The protein belongs to the SecA family. As to quaternary structure, monomer and homodimer. Part of the essential Sec protein translocation apparatus which comprises SecA, SecYEG and auxiliary proteins SecDF. Other proteins may also be involved.

The protein resides in the cell inner membrane. It localises to the cytoplasm. It catalyses the reaction ATP + H2O + cellular proteinSide 1 = ADP + phosphate + cellular proteinSide 2.. Functionally, part of the Sec protein translocase complex. Interacts with the SecYEG preprotein conducting channel. Has a central role in coupling the hydrolysis of ATP to the transfer of proteins into and across the cell membrane, serving as an ATP-driven molecular motor driving the stepwise translocation of polypeptide chains across the membrane. In Amoebophilus asiaticus (strain 5a2), this protein is Protein translocase subunit SecA.